The chain runs to 185 residues: Ribosome-recycling factor (185 aa).

This sequence belongs to the RRF family.

Its subcellular location is the cytoplasm. Its function is as follows. Responsible for the release of ribosomes from messenger RNA at the termination of protein biosynthesis. May increase the efficiency of translation by recycling ribosomes from one round of translation to another. The polypeptide is Ribosome-recycling factor (Buchnera aphidicola subsp. Acyrthosiphon pisum (strain Tuc7)).